A 122-amino-acid chain; its full sequence is Conotoxin flf14c (122 aa).

The N-terminal stretch at 1 to 22 (MGFRVLVLIVMVTTSALPFTFS) is a signal peptide. A propeptide spanning residues 23–96 (EESGRSPFRP…AESPVGQKRW (74 aa)) is cleaved from the precursor. Residues 53-89 (RADGQTPDMHQPEMRRPEMRRPEVRRPEVRQPEFAES) are disordered. Basic and acidic residues predominate over residues 62–85 (HQPEMRRPEMRRPEVRRPEVRQPE). 2 disulfide bridges follow: cysteine 101–cysteine 121 and cysteine 105–cysteine 117.

Expressed by the venom duct.

It is found in the secreted. The sequence is that of Conotoxin flf14c from Conus anabathrum floridanus (Florida cone).